Here is a 468-residue protein sequence, read N- to C-terminus: uncharacterized protein (468 aa).

The tract at residues 1–22 (MVKRSSHRQVVLDEDDEENYNN) is disordered. An RING-type zinc finger spans residues 85–123 (CPICTEALQRPFTTHCGHTYCYECLLNWLKESKSCPTCR). Over residues 386 to 402 (DSLNSSSNNSPSHNNIH) the composition is skewed to low complexity. A disordered region spans residues 386–468 (DSLNSSSNNS…TIQLDSDEES (83 aa)). Residues 417–434 (IVTNGTGLRSSQSSSQNR) show a composition bias toward polar residues.

It is found in the nucleus. This is an uncharacterized protein from Schizosaccharomyces pombe (strain 972 / ATCC 24843) (Fission yeast).